The following is a 318-amino-acid chain: Tumor necrosis factor ligand superfamily member 11 (318 aa).

The Cytoplasmic portion of the chain corresponds to 1–47; the sequence is MRRANRDYGKYLRGSEEMGSCPGVPHEGPLHPAPSAPAPAPPPAASR. The segment at 13–41 is disordered; the sequence is RGSEEMGSCPGVPHEGPLHPAPSAPAPAP. Pro residues predominate over residues 31-41; the sequence is HPAPSAPAPAP. Residues 48–68 traverse the membrane as a helical; Signal-anchor for type II membrane protein segment; that stretch reads FMFLALLGLGLGQVVCSIALF. At 69-318 the chain is on the extracellular side; that stretch reads LYFRAQMDPN…FGAFKVQDID (250 aa). Residues 165–314 form the THD domain; the sequence is PFAHLTINAA…DATYFGAFKV (150 aa). Asn-199 and Asn-264 each carry an N-linked (GlcNAc...) asparagine glycan.

Belongs to the tumor necrosis factor family. As to quaternary structure, homotrimer. Interacts with TNFRSF11A and TNFRSF11B. Interacts with FBN1 (via N-terminal domain) in a Ca(+2)-dependent manner. Interacts with TNFAIP6 (via both Link and CUB domains). Post-translationally, the soluble form derives from the membrane form by proteolytic processing. In terms of tissue distribution, highly expressed in thymus and bone tissues.

It localises to the cell membrane. It is found in the secreted. In terms of biological role, cytokine that binds to TNFRSF11B/OPG and to TNFRSF11A/RANK. Osteoclast differentiation and activation factor. Augments the ability of dendritic cells to stimulate naive T-cell proliferation. May be an important regulator of interactions between T-cells and dendritic cells and may play a role in the regulation of the T-cell-dependent immune response. May also play an important role in enhanced bone-resorption in humoral hypercalcemia of malignancy. Induces osteoclastogenesis by activating multiple signaling pathways in osteoclast precursor cells, chief among which is induction of long lasting oscillations in the intracellular concentration of Ca (2+) resulting in the activation of NFATC1, which translocates to the nucleus and induces osteoclast-specific gene transcription to allow differentiation of osteoclasts. During osteoclast differentiation, in a TMEM64 and ATP2A2-dependent manner induces activation of CREB1 and mitochondrial ROS generation necessary for proper osteoclast generation. This chain is Tumor necrosis factor ligand superfamily member 11 (Tnfsf11), found in Rattus norvegicus (Rat).